The following is a 310-amino-acid chain: tRNA-5-methyluridine(54) 2-sulfurtransferase (310 aa).

Residues Cys-3, Cys-6, Cys-22, and His-25 each contribute to the Zn(2+) site. ATP-binding residues include Ala-53 and Ile-79. The [4Fe-4S] cluster site is built by Cys-128 and Cys-131. Cys-128 and Cys-220 are disulfide-bonded. 2 residues coordinate ATP: Lys-135 and Gly-154. Position 220 (Cys-220) interacts with [4Fe-4S] cluster. Positions 272, 275, 284, and 287 each coordinate Zn(2+).

It belongs to the TtcA family. TtuA subfamily. In terms of assembly, homodimer. It depends on [4Fe-4S] cluster as a cofactor. Mg(2+) serves as cofactor.

It catalyses the reaction 5-methyluridine(54) in tRNA + hydrogen sulfide + ATP = 5-methyl-2-thiouridine(54) in tRNA + AMP + diphosphate. It participates in tRNA modification. Functionally, catalyzes the ATP-dependent 2-thiolation of 5-methyluridine residue at position 54 in the T loop of tRNAs, leading to 5-methyl-2-thiouridine (m(5)s(2)U or s(2)T). This modification allows thermal stabilization of tRNAs in thermophilic microorganisms, and is required for cell growth at high temperatures. Can use free sulfide as sulfur source in vitro, which may be also the sulfur source in vivo. This Pyrococcus horikoshii (strain ATCC 700860 / DSM 12428 / JCM 9974 / NBRC 100139 / OT-3) protein is tRNA-5-methyluridine(54) 2-sulfurtransferase.